The primary structure comprises 55 residues: Large ribosomal subunit protein bL33 (55 aa).

This sequence belongs to the bacterial ribosomal protein bL33 family.

The polypeptide is Large ribosomal subunit protein bL33 (Alcanivorax borkumensis (strain ATCC 700651 / DSM 11573 / NCIMB 13689 / SK2)).